A 296-amino-acid polypeptide reads, in one-letter code: Light-independent protochlorophyllide reductase iron-sulfur ATP-binding protein (296 aa).

ATP is bound by residues 39-44 (GIGKST) and lysine 68. Serine 43 is a binding site for Mg(2+). Positions 124 and 158 each coordinate [4Fe-4S] cluster. Residue 209 to 210 (NR) coordinates ATP.

It belongs to the NifH/BchL/ChlL family. Homodimer. Protochlorophyllide reductase is composed of three subunits; ChlL, ChlN and ChlB. It depends on [4Fe-4S] cluster as a cofactor.

The enzyme catalyses chlorophyllide a + oxidized 2[4Fe-4S]-[ferredoxin] + 2 ADP + 2 phosphate = protochlorophyllide a + reduced 2[4Fe-4S]-[ferredoxin] + 2 ATP + 2 H2O. It functions in the pathway porphyrin-containing compound metabolism; chlorophyll biosynthesis (light-independent). In terms of biological role, component of the dark-operative protochlorophyllide reductase (DPOR) that uses Mg-ATP and reduced ferredoxin to reduce ring D of protochlorophyllide (Pchlide) to form chlorophyllide a (Chlide). This reaction is light-independent. The L component serves as a unique electron donor to the NB-component of the complex, and binds Mg-ATP. The sequence is that of Light-independent protochlorophyllide reductase iron-sulfur ATP-binding protein from Prochlorococcus marinus (strain MIT 9313).